Here is a 525-residue protein sequence, read N- to C-terminus: GMP synthase [glutamine-hydrolyzing] (525 aa).

Positions arginine 9–leucine 207 constitute a Glutamine amidotransferase type-1 domain. The active-site Nucleophile is the cysteine 86. Active-site residues include histidine 181 and glutamate 183. The GMPS ATP-PPase domain occupies tryptophan 208 to arginine 400. Serine 235 to serine 241 contacts ATP.

Homodimer.

The enzyme catalyses XMP + L-glutamine + ATP + H2O = GMP + L-glutamate + AMP + diphosphate + 2 H(+). Its pathway is purine metabolism; GMP biosynthesis; GMP from XMP (L-Gln route): step 1/1. Functionally, catalyzes the synthesis of GMP from XMP. In Escherichia coli O139:H28 (strain E24377A / ETEC), this protein is GMP synthase [glutamine-hydrolyzing].